The following is a 748-amino-acid chain: Disintegrin and metalloproteinase domain-containing protein 10 (748 aa).

A signal peptide spans 1–19; it reads MVLLRVLILLLSWAAGMGG. The propeptide occupies 20–213; it reads QYGNPLNKYI…NGPELLRKKR (194 aa). Residues 20–672 lie on the Extracellular side of the membrane; sequence QYGNPLNKYI…SPELYENIAE (653 aa). Residues 171–178 carry the Cysteine switch motif; sequence GGCADHSV. Cys173 is a Zn(2+) binding site. A Peptidase M12B domain is found at 220–456; sequence NTCQLYIQTD…KRNNCFVESG (237 aa). Disulfide bonds link Cys222–Cys313, Cys344–Cys451, Cys399–Cys435, Cys460–Cys495, Cys471–Cys484, Cys473–Cys479, Cys483–Cys515, Cys503–Cys511, Cys510–Cys536, Cys524–Cys543, Cys530–Cys562, Cys555–Cys567, Cys572–Cys598, Cys580–Cys607, Cys582–Cys597, Cys594–Cys639, and Cys632–Cys645. N-linked (GlcNAc...) asparagine glycans are attached at residues Asn267 and Asn278. Zn(2+) is bound at residue His383. Residue Glu384 is part of the active site. Residues His387 and His393 each coordinate Zn(2+). The N-linked (GlcNAc...) asparagine glycan is linked to Asn439. A Disintegrin domain is found at 457–551; it reads QPICGNGMVE…LCPASDPKPN (95 aa). A glycan (N-linked (GlcNAc...) asparagine) is linked at Asn551. Residues 673-693 traverse the membrane as a helical segment; it reads WIVAHWWAVLLMGIALIMLMA. Topologically, residues 694–748 are cytoplasmic; it reads GFIKICSVHTPSSNPKLPPPKPLPGTLKRRRPPQPIQQPQRQRPRESYQMGHMRR. The interval 704–748 is disordered; it reads PSSNPKLPPPKPLPGTLKRRRPPQPIQQPQRQRPRESYQMGHMRR. The SH3-binding motif lies at 708-715; sequence PKLPPPKP. Thr719 is modified (phosphothreonine; by FAM20C). An SH3-binding motif is present at residues 722-728; that stretch reads RRRPPQP. Positions 734 to 748 are interaction with AP2A1, AP2A2 and AP2M1; it reads RQRPRESYQMGHMRR.

Forms a ternary EFNA5-EPHA3-ADAM10 complex mediating EFNA5 extracellular domain shedding by ADAM10 which regulates the EFNA5-EPHA3 complex internalization and function, the cleavage occurs in trans, with ADAM10 and its substrate being on the membranes of opposing cells. Interacts with the clathrin adapter AP2 complex subunits AP2A1, AP2A2, AP2B1, and AP2M1; this interaction facilitates ADAM10 endocytosis from the plasma membrane during long-term potentiation in hippocampal neurons. Forms a ternary complex composed of ADAM10, EPHA4 and CADH1; within the complex, ADAM10 cleaves CADH1 which disrupts adherens junctions. Interacts with EPHA2. Interacts with NGF in a divalent cation-dependent manner. Interacts with TSPAN14; the interaction promotes ADAM10 maturation and cell surface expression. Interacts with TSPAN5, TSPAN10, TSPAN14, TSPAN15, TSPAN17 and TSPAN33; these interactions regulate ADAM10 substrate specificity, endocytosis and turnover. Interacts (via extracellular domain) with TSPAN33 (via extracellular domain) and (via cytoplasmic domain) with AFDN; interaction with TSPAN33 allows the docking of ADAM10 to zonula adherens through a PDZ11-dependent interaction between TSPAN33 and PLEKHA7 while interaction with AFDN locks ADAM10 at zonula adherens. Interacts with DLG1; this interaction recruits ADAM10 to the cell membrane during long-term depression in hippocampal neurons. Interacts (via extracellular domain) with BACE1 (via extracellular domain). Interacts with FAM171A1. In terms of assembly, (Microbial infection) Interacts with S.aureus hly; this interaction is necessary for toxin pore formation, disruption of focal adhesions and S.aureus hly-mediated cytotoxicity. Requires Zn(2+) as cofactor. In terms of processing, the precursor is cleaved by furin and PCSK7. As to expression, expressed in the brain (at protein level). Expressed in spleen, lymph node, thymus, peripheral blood leukocyte, bone marrow, cartilage, chondrocytes and fetal liver.

It localises to the cell membrane. The protein localises to the golgi apparatus membrane. It is found in the cytoplasmic vesicle. Its subcellular location is the clathrin-coated vesicle. The protein resides in the cell projection. It localises to the axon. The protein localises to the dendrite. It is found in the cell junction. Its subcellular location is the adherens junction. The protein resides in the cytoplasm. It catalyses the reaction Endopeptidase of broad specificity.. With respect to regulation, catalytically inactive when the propeptide is intact and associated with the mature enzyme. The disintegrin and cysteine-rich regions modulate access of substrates to exerts an inhibitory effect on the cleavage of ADAM10 substrates. Functionally, transmembrane metalloprotease which mediates the ectodomain shedding of a myriad of transmembrane proteins, including adhesion proteins, growth factor precursors and cytokines being essential for development and tissue homeostasis. Associates with six members of the tetraspanin superfamily TspanC8 which regulate its exit from the endoplasmic reticulum and its substrate selectivity. Cleaves the membrane-bound precursor of TNF-alpha at '76-Ala-|-Val-77' to its mature soluble form. Responsible for the proteolytical release of soluble JAM3 from endothelial cells surface. Responsible for the proteolytic release of several other cell-surface proteins, including heparin-binding epidermal growth-like factor, ephrin-A2, CD44, CDH2 and for constitutive and regulated alpha-secretase cleavage of amyloid precursor protein (APP). Contributes to the normal cleavage of the cellular prion protein. Involved in the cleavage of the adhesion molecule L1 at the cell surface and in released membrane vesicles, suggesting a vesicle-based protease activity. Also controls the proteolytic processing of Notch and mediates lateral inhibition during neurogenesis. Required for the development of type 1 transitional B cells into marginal zone B cells, probably by cleaving Notch. Responsible for the FasL ectodomain shedding and for the generation of the remnant ADAM10-processed FasL (FasL APL) transmembrane form. Also cleaves the ectodomain of the integral membrane proteins CORIN and ITM2B. Mediates the proteolytic cleavage of LAG3, leading to release the secreted form of LAG3. Mediates the proteolytic cleavage of IL6R and IL11RA, leading to the release of secreted forms of IL6R and IL11RA. Enhances the cleavage of CHL1 by BACE1. Cleaves NRCAM. Cleaves TREM2, resulting in shedding of the TREM2 ectodomain. Involved in the development and maturation of glomerular and coronary vasculature. During development of the cochlear organ of Corti, promotes pillar cell separation by forming a ternary complex with CADH1 and EPHA4 and cleaving CADH1 at adherens junctions. May regulate the EFNA5-EPHA3 signaling. Regulates leukocyte transmigration as a sheddase for the adherens junction protein VE-cadherin/CDH5 in endothelial cells. Its function is as follows. (Microbial infection) Promotes the cytotoxic activity of S.aureus hly by binding to the toxin at zonula adherens and promoting formation of toxin pores. This is Disintegrin and metalloproteinase domain-containing protein 10 from Homo sapiens (Human).